Consider the following 594-residue polypeptide: UvrABC system protein C (594 aa).

The 87-residue stretch at 13 to 99 folds into the GIY-YIG domain; the sequence is SSSGVYQYFD…IKQLKPKYNI (87 aa). Positions 205–240 constitute a UVR domain; that stretch reads DRLIKELELKMERLSSNLRFEEALIYRDRIAKIQKI.

Belongs to the UvrC family. As to quaternary structure, interacts with UvrB in an incision complex.

The protein resides in the cytoplasm. In terms of biological role, the UvrABC repair system catalyzes the recognition and processing of DNA lesions. UvrC both incises the 5' and 3' sides of the lesion. The N-terminal half is responsible for the 3' incision and the C-terminal half is responsible for the 5' incision. In Helicobacter pylori (strain J99 / ATCC 700824) (Campylobacter pylori J99), this protein is UvrABC system protein C.